Reading from the N-terminus, the 570-residue chain is PTS system lactose-specific EIICB component (570 aa).

The PTS EIIC type-3 domain maps to 9-410; that stretch reads IEKGKPFFEK…VVDIIIYYPF (402 aa). A run of 9 helical transmembrane segments spans residues 31–51, 65–85, 104–124, 133–153, 178–198, 223–243, 283–303, 340–360, and 382–402; these read GFIS…IAYV, AILM…VAGT, INFI…ASDP, AFMG…TVIV, FKDL…DLVI, GWIG…VGIH, MFIV…MFMW, VFFI…KLFV, and IIMG…LIVV. The 104-residue stretch at 467–570 folds into the PTS EIIB type-3 domain; that stretch reads QTNVLVLCAG…LDFVQQQFEN (104 aa). C474 serves as the catalytic Phosphocysteine intermediate; for EIIB activity. The residue at position 474 (C474) is a Phosphocysteine; by EIIA.

It localises to the cell membrane. It carries out the reaction lactose(out) + N(pros)-phospho-L-histidyl-[protein] = lactose 6-phosphate(in) + L-histidyl-[protein]. Functionally, the phosphoenolpyruvate-dependent sugar phosphotransferase system (sugar PTS), a major carbohydrate active transport system, catalyzes the phosphorylation of incoming sugar substrates concomitantly with their translocation across the cell membrane. The enzyme II LacEF PTS system is involved in lactose transport. This is PTS system lactose-specific EIICB component from Staphylococcus aureus (strain MSSA476).